The primary structure comprises 198 residues: NAD(P)H dehydrogenase (quinone) (198 aa).

The Flavodoxin-like domain occupies 4-189 (ILVLYYSMYG…SIARYQGEYV (186 aa)). FMN-binding positions include 10-15 (SMYGHI) and 78-80 (TRF). Y12 lines the NAD(+) pocket. W98 contacts substrate. Residues 113–118 (STGTGG) and H133 contribute to the FMN site.

The protein belongs to the WrbA family. Requires FMN as cofactor.

The enzyme catalyses a quinone + NADH + H(+) = a quinol + NAD(+). The catalysed reaction is a quinone + NADPH + H(+) = a quinol + NADP(+). The sequence is that of NAD(P)H dehydrogenase (quinone) from Salmonella paratyphi A (strain ATCC 9150 / SARB42).